The chain runs to 295 residues: UDP-N-acetylenolpyruvoylglucosamine reductase (295 aa).

Positions 24-188 (KVGGNAEIFF…LKAVFKINKG (165 aa)) constitute an FAD-binding PCMH-type domain. Arg168 is an active-site residue. Catalysis depends on Ser217, which acts as the Proton donor. Glu287 is an active-site residue.

The protein belongs to the MurB family. It depends on FAD as a cofactor.

It localises to the cytoplasm. The enzyme catalyses UDP-N-acetyl-alpha-D-muramate + NADP(+) = UDP-N-acetyl-3-O-(1-carboxyvinyl)-alpha-D-glucosamine + NADPH + H(+). The protein operates within cell wall biogenesis; peptidoglycan biosynthesis. In terms of biological role, cell wall formation. This Rickettsia massiliae (strain Mtu5) protein is UDP-N-acetylenolpyruvoylglucosamine reductase.